A 404-amino-acid chain; its full sequence is MKLPIYLDYSATTPVDPRVAEKMMQFLTLDGTFGNPASRSHRFGWQAEEAVDIARNQIAELVGADPREIVFTSGATEADNLAIKGVANFYQKKGKHIITSKTEHKAVLDTCRQLEREGFEVTYLAPQRNGIIDLAELEAAMREDTILVSIMHVNNEIGVVQDIETIGEMCRSRGIVFHVDATQSVGKLPIDLNQLKVDLMSFSGHKIYGPKGIGALYVRRKPRIRLEAQMHGGGHERGMRSGTLPVHQIVGMGEAYRIAKEEMTAEMDRLRTLRDRLWNGINDIEEVYLNGDIEQGAPNILNVSFNYVEGESLIMALKDLAVSSGSACTSASLEPSYVLRALGMNDELAHSSIRFSLGRFTTEEEIDYTIELVRKSIGRLRDLSPLWEMFKQGVDISSIEWAHH.

Pyridoxal 5'-phosphate is bound by residues 75–76 (AT), Asn-155, Gln-183, and 203–205 (SGH). Lys-206 is modified (N6-(pyridoxal phosphate)lysine). Thr-243 contacts pyridoxal 5'-phosphate. Cys-328 functions as the Cysteine persulfide intermediate in the catalytic mechanism. Cys-328 is a [2Fe-2S] cluster binding site.

It belongs to the class-V pyridoxal-phosphate-dependent aminotransferase family. NifS/IscS subfamily. In terms of assembly, homodimer. Forms a heterotetramer with IscU, interacts with other sulfur acceptors. Pyridoxal 5'-phosphate is required as a cofactor.

It localises to the cytoplasm. It carries out the reaction (sulfur carrier)-H + L-cysteine = (sulfur carrier)-SH + L-alanine. Its pathway is cofactor biosynthesis; iron-sulfur cluster biosynthesis. Its function is as follows. Master enzyme that delivers sulfur to a number of partners involved in Fe-S cluster assembly, tRNA modification or cofactor biosynthesis. Catalyzes the removal of elemental sulfur atoms from cysteine to produce alanine. Functions as a sulfur delivery protein for Fe-S cluster synthesis onto IscU, an Fe-S scaffold assembly protein, as well as other S acceptor proteins. The sequence is that of Cysteine desulfurase IscS from Pectobacterium carotovorum subsp. carotovorum (strain PC1).